The sequence spans 147 residues: MLVIVGGTTTGILFLGPRYLPRYLPILGINGASAMKKSYFLANFLACLGLLAISSSSALLITSSPSLLAASATAPSAMTAIFTSFPLPWGSTTSSLNLFSGRLRSISLRFTATSTLCVKLRGLARALASFTASTIFCLSKAILDIPP.

A run of 2 helical transmembrane segments spans residues 41–61 (LANFLACLGLLAISSSSALLI) and 67–87 (LLAASATAPSAMTAIFTSFPL).

The protein localises to the cell membrane. This is an uncharacterized protein from Pyrococcus horikoshii (strain ATCC 700860 / DSM 12428 / JCM 9974 / NBRC 100139 / OT-3).